The sequence spans 739 residues: AN1-type zinc finger protein 4 (739 aa).

The Ubiquitin-like domain occupies 54 to 129 (MELFIETLTG…LKLVLAMRGG (76 aa)). Residues 246 to 255 (KPKKVVKVKP) show a composition bias toward basic residues. Disordered stretches follow at residues 246-270 (KPKK…STAA) and 287-316 (LPSG…RPVS). The AN1-type zinc finger occupies 673–720 (KKIMKHCFLCGKKTGLATSFECRCGNNFCASHRYAEAHGCTYDYKSAG). Zn(2+)-binding residues include Cys-679, Cys-682, Cys-694, Cys-696, Cys-701, His-704, His-710, and Cys-712.

The sequence is that of AN1-type zinc finger protein 4 (Zfand4) from Mus musculus (Mouse).